The primary structure comprises 763 residues: 5-methyltetrahydropteroyltriglutamate--homocysteine methyltransferase (763 aa).

5-methyltetrahydropteroyltri-L-glutamate contacts are provided by residues 16–19 (RELK) and lysine 121. Residues 440-442 (IGS) and glutamate 493 contribute to the L-homocysteine site. Residues 440–442 (IGS) and glutamate 493 contribute to the L-methionine site. 5-methyltetrahydropteroyltri-L-glutamate contacts are provided by residues 524–525 (RC) and tryptophan 570. L-homocysteine is bound at residue aspartate 608. Aspartate 608 lines the L-methionine pocket. Glutamate 614 lines the 5-methyltetrahydropteroyltri-L-glutamate pocket. Residues histidine 650, cysteine 652, and glutamate 674 each coordinate Zn(2+). The Proton donor role is filled by histidine 703. Residue cysteine 735 participates in Zn(2+) binding.

The protein belongs to the vitamin-B12 independent methionine synthase family. Requires Zn(2+) as cofactor.

The catalysed reaction is 5-methyltetrahydropteroyltri-L-glutamate + L-homocysteine = tetrahydropteroyltri-L-glutamate + L-methionine. It functions in the pathway amino-acid biosynthesis; L-methionine biosynthesis via de novo pathway; L-methionine from L-homocysteine (MetE route): step 1/1. Its function is as follows. Catalyzes the transfer of a methyl group from 5-methyltetrahydrofolate to homocysteine resulting in methionine formation. The sequence is that of 5-methyltetrahydropteroyltriglutamate--homocysteine methyltransferase from Paraburkholderia phymatum (strain DSM 17167 / CIP 108236 / LMG 21445 / STM815) (Burkholderia phymatum).